Consider the following 635-residue polypeptide: UvrABC system protein C (635 aa).

In terms of domain architecture, GIY-YIG spans 20–97 (ERSGVYRMFD…IKKFQPKFNI (78 aa)). One can recognise a UVR domain in the interval 207–242 (KELQENLSKKMEELSEQMRFEEAAEIRDRIKALSYV).

This sequence belongs to the UvrC family. As to quaternary structure, interacts with UvrB in an incision complex.

The protein localises to the cytoplasm. In terms of biological role, the UvrABC repair system catalyzes the recognition and processing of DNA lesions. UvrC both incises the 5' and 3' sides of the lesion. The N-terminal half is responsible for the 3' incision and the C-terminal half is responsible for the 5' incision. In Rickettsia bellii (strain RML369-C), this protein is UvrABC system protein C.